Consider the following 146-residue polypeptide: Angiogenin (146 aa).

The N-terminal stretch at 1-24 (MVMGLGLFLLVFMLGLGLTLPTLA) is a signal peptide. Gln-25 bears the Pyrrolidone carboxylic acid mark. His-37 acts as the Proton acceptor in catalysis. Arg-45 provides a ligand contact to tRNA. Intrachain disulfides connect Cys-50-Cys-105, Cys-63-Cys-116, and Cys-81-Cys-131. A Nucleolar localization signal motif is present at residues 55–59 (RRRHL). TRNA contacts are provided by Cys-105 and Ile-127. His-138 acts as the Proton donor in catalysis.

This sequence belongs to the pancreatic ribonuclease family. In terms of assembly, homodimer. Interacts with RNH1; inhibiting ANG ribonuclease activity. Interacts with PCNA.

It localises to the secreted. Its subcellular location is the nucleus. The protein localises to the nucleolus. The protein resides in the cytoplasm. It is found in the stress granule. Has weak tRNA ribonuclease activity by itself due to partial autoinhibition by its C-terminus, which folds into a short alpha-helix that partially occludes the substrate-binding site. In absence of stress, the ribonuclease activity is inhibited by RNH1 in the cytoplasm. In response to stress, dissociates from RNH1 in the cytoplasm and associates with cytoplasmic ribosomes with vacant A-sites: ribosomes directly activate the tRNA ribonuclease activity of ANG by refolding the C-terminal alpha-helix. In response to stress, the angiogenic activity of ANG is inhibited by RNH1 in the nucleus. Functionally, secreted ribonuclease that can either promote or restrict cell proliferation of target cells, depending on the context. Endocytosed in target cells via its receptor PLXNB2 and translocates to the cytoplasm or nucleus. Under stress conditions, localizes to the cytoplasm and promotes the assembly of stress granules (SGs): specifically cleaves a subset of tRNAs within anticodon loops to produce tRNA-derived stress-induced fragments (tiRNAs), resulting in translation repression and inhibition of cell proliferation. tiRNas also prevent formation of apoptosome, thereby promoting cell survival. Preferentially cleaves RNAs between a pyrimidine and an adenosine residue, suggesting that it cleaves the anticodon loop of tRNA(Ala) (32-UUAGCAU-38) after positions 33 and 36. Cleaves a subset of tRNAs, including tRNA(Ala), tRNA(Glu), tRNA(Gly), tRNA(Lys), tRNA(Val), tRNA(His), tRNA(Asp) and tRNA(Sec). Under growth conditions and in differentiated cells, translocates to the nucleus and stimulates ribosomal RNA (rRNA) transcription, including that containing the initiation site sequences of 45S rRNA, thereby promoting cell growth and proliferation. Angiogenin induces vascularization of normal and malignant tissues via its ability to promote rRNA transcription. Involved in hematopoietic stem and progenitor cell (HSPC) growth and survival by promoting rRNA transcription in growth conditions and inhibiting translation in response to stress, respectively. Mediates the crosstalk between myeloid and intestinal epithelial cells to protect the intestinal epithelial barrier integrity: secreted by myeloid cells and promotes intestinal epithelial cells proliferation and survival. Also mediates osteoclast-endothelial cell crosstalk in growing bone: produced by osteoclasts and protects the neighboring vascular cells against senescence by promoting rRNA transcription. The sequence is that of Angiogenin (ANG) from Papio hamadryas (Hamadryas baboon).